The chain runs to 819 residues: Disintegrin and metalloproteinase domain-containing protein 9 (819 aa).

Residues 1 to 28 form the signal peptide; that stretch reads MGSGARFPSGTLRVRWLLLLGLVGPVLG. The Extracellular portion of the chain corresponds to 29–697; sequence AARPGFQQTS…YNEMNTALRD (669 aa). N-linked (GlcNAc...) asparagine glycosylation is found at Asn-125, Asn-144, Asn-154, and Asn-231. Positions 212-406 constitute a Peptidase M12B domain; sequence RYVELFIVVD…KGGNCLLNIP (195 aa). 7 cysteine pairs are disulfide-bonded: Cys-322-Cys-401, Cys-363-Cys-385, Cys-365-Cys-370, Cys-473-Cys-493, Cys-644-Cys-656, Cys-650-Cys-662, and Cys-664-Cys-673. His-347 contacts Zn(2+). Glu-348 is an active-site residue. 2 residues coordinate Zn(2+): His-351 and His-357. Asn-381 and Asn-487 each carry an N-linked (GlcNAc...) asparagine glycan. Residues 414–501 enclose the Disintegrin domain; sequence APSCGNKLVD…FCQPDVFIQN (88 aa). An EGF-like domain is found at 644–698; that stretch reads CDVQKKCHGHGVCNSNKNCHCENGWAPPNCETKGYGGSVDSGPTYNEMNTALRDG. Residues 698–718 form a helical membrane-spanning segment; the sequence is GLLVFFFLIVPLIVCAIFIFI. At 719–819 the chain is on the cytoplasmic side; sequence KRDQLWRSYF…PAPPLYSSLT (101 aa). 2 disordered regions span residues 734-763 and 780-819; these read QTYE…VTPP and AKQP…SSLT. Over residues 735 to 750 the composition is skewed to polar residues; the sequence is TYESDGKNQANPSRQP. Ser-758 is subject to Phosphoserine. Thr-761 carries the post-translational modification Phosphothreonine.

As to quaternary structure, interacts with SH3GL2 and SNX9 through its cytoplasmic tail. Interacts with ITGA6. Zn(2+) is required as a cofactor. In terms of processing, proteolytically cleaved in the trans-Golgi network before it reaches the plasma membrane to generate a mature protein. The removal of the pro-domain occurs via cleavage at two different sites. Processed most likely by a pro-protein convertase such as furin, at the boundary between the pro-domain and the catalytic domain. An additional upstream cleavage pro-protein convertase site (Arg-56/Glu-57) has an important role in the activation of ADAM9. Post-translationally, phosphorylation is induced in vitro by phorbol-12-myristate-13-acetate (PMA). As to expression, widely expressed. Expressed in chondrocytes. Isoform 2 is highly expressed in liver and heart.

It is found in the cell membrane. The protein localises to the secreted. With respect to regulation, synthesized as an inactive form which is proteolytically cleaved to generate an active enzyme. Processing at the upstream site is particularly important for activation of the proenzyme, whereas processing at the boundary between the pro-domain and the catalytic domain does not appear to be essential. Inhibited by hydroxamic acid-based inhibitors. Its function is as follows. Metalloprotease that cleaves and releases a number of molecules with important roles in tumorigenesis and angiogenesis, such as TEK, KDR, EPHB4, CD40, VCAM1 and CDH5. May mediate cell-cell, cell-matrix interactions and regulate the motility of cells via interactions with integrins. May act as alpha-secretase for amyloid precursor protein (APP). This chain is Disintegrin and metalloproteinase domain-containing protein 9 (ADAM9), found in Homo sapiens (Human).